A 512-amino-acid polypeptide reads, in one-letter code: Protein OS-9 homolog (512 aa).

A signal peptide spans 1-17 (MRRFNLILLASLQLVGA). The interval 71 to 91 (QAREADARDNEAENKDQDGPS) is disordered. Residues 73–88 (READARDNEAENKDQD) are compositionally biased toward basic and acidic residues. N-linked (GlcNAc...) asparagine glycosylation is present at N118. Positions 149–288 (DSCLYFMSGW…VVNTPRLCND (140 aa)) constitute an MRH domain. C151 and C164 are oxidised to a cystine. The a mannooligosaccharide derivative site is built by W158, W159, Q171, D242, R248, E270, and Y276. 2 disulfide bridges follow: C241/C274 and C256/C286. Disordered stretches follow at residues 329-349 (QVPL…PRDV) and 485-512 (AAAK…KDEL). Over residues 492-504 (DDEEEVVEGSEEQ) the composition is skewed to acidic residues. The Prevents secretion from ER motif lies at 509–512 (KDEL).

Belongs to the OS-9 family. As to quaternary structure, interacts with missfolded ER lumenal proteins.

The protein resides in the endoplasmic reticulum membrane. Functionally, lectin involved in the quality control of the secretory pathway. As a member of the endoplasmic reticulum-associated degradation lumenal (ERAD-L) surveillance system, targets misfolded endoplasmic reticulum lumenal glycoproteins for degradation. In Gibberella zeae (strain ATCC MYA-4620 / CBS 123657 / FGSC 9075 / NRRL 31084 / PH-1) (Wheat head blight fungus), this protein is Protein OS-9 homolog (YOS1).